Here is a 353-residue protein sequence, read N- to C-terminus: Mitochondrial import inner membrane translocase subunit TIM50 (353 aa).

The transit peptide at 1–21 directs the protein to the mitochondrion; that stretch reads MAASAALFSRLRSGLRVGARG. Residues 22-65 are Mitochondrial matrix-facing; sequence LCTRLAPPPPRTPEQVTEIANRGGSKAQGPQHQPGSEGPSYAKK. The interval 24 to 59 is disordered; that stretch reads TRLAPPPPRTPEQVTEIANRGGSKAQGPQHQPGSEG. A helical transmembrane segment spans residues 66-86; sequence IALWIAGLLGAGGTVSIVYIF. Residues 87–353 are Mitochondrial intermembrane-facing; that stretch reads GNNPVDENGT…SRLWPRSKQP (267 aa). Positions 143–286 constitute an FCP1 homology domain; the sequence is YYQPPYTLVL…LDLSAFLKTI (144 aa). The residue at position 341 (Ser-341) is a Phosphoserine.

This sequence belongs to the TIM50 family. As to quaternary structure, component of the TIM23 complex at least composed of TIMM23, TIMM17 (TIMM17A or TIMM17B) and TIMM50; within this complex, directly interacts with TIMM23. The complex interacts with the TIMM44 component of the PAM complex and with DNAJC15.

It localises to the mitochondrion inner membrane. In terms of biological role, essential component of the TIM23 complex, a complex that mediates the translocation of transit peptide-containing proteins across the mitochondrial inner membrane. Has some phosphatase activity in vitro; however such activity may not be relevant in vivo. The chain is Mitochondrial import inner membrane translocase subunit TIM50 (Timm50) from Mus musculus (Mouse).